We begin with the raw amino-acid sequence, 166 residues long: UPF0304 protein VF_1794 (166 aa).

The protein belongs to the UPF0304 family.

This chain is UPF0304 protein VF_1794, found in Aliivibrio fischeri (strain ATCC 700601 / ES114) (Vibrio fischeri).